The following is a 445-amino-acid chain: 6-phosphogluconate dehydrogenase, decarboxylating (445 aa).

NADP(+)-binding positions include 1-4 (AVMG), 22-24 (NRS), 63-65 (VKA), and Asn-91. Substrate contacts are provided by residues Asn-91 and 117–119 (SGG). Lys-172 acts as the Proton acceptor in catalysis. 175–176 (HN) provides a ligand contact to substrate. The active-site Proton donor is the Glu-179. Substrate-binding residues include Tyr-180, Lys-249, Arg-276, Arg-434, and His-440.

This sequence belongs to the 6-phosphogluconate dehydrogenase family. As to quaternary structure, homodimer.

The enzyme catalyses 6-phospho-D-gluconate + NADP(+) = D-ribulose 5-phosphate + CO2 + NADPH. Its pathway is carbohydrate degradation; pentose phosphate pathway; D-ribulose 5-phosphate from D-glucose 6-phosphate (oxidative stage): step 3/3. Functionally, catalyzes the oxidative decarboxylation of 6-phosphogluconate to ribulose 5-phosphate and CO(2), with concomitant reduction of NADP to NADPH. This Shigella boydii protein is 6-phosphogluconate dehydrogenase, decarboxylating (gnd).